The primary structure comprises 417 residues: Paired box protein Pax-2 (417 aa).

The paired DNA-binding region spans 16–142 (GHGGVNQLGG…SSINRIIRTK (127 aa)). The segment at 19–75 (GVNQLGGVFVNGRPLPDVVRQRIVELAHQGVRPCDISRQLRVSHGCVSKILGRYYET) is PAI subdomain. Positions 94–142 (KVVDKIAEYKRQNPTMFAWEIRDRLLAEGICDNDTVPSVSSINRIIRTK) are RED subdomain. A Phosphothreonine modification is found at T226. The segment at 304-325 (KSSLSASTNPELGSNVSGTQTY) is disordered. Polar residues predominate over residues 305–325 (SSLSASTNPELGSNVSGTQTY).

Interacts with ELGN3; the interaction targets PAX2 for destruction. Interacts with TLE4. As to expression, expressed in primitive cells of the kidney, ureter, eye, ear and central nervous system.

It localises to the nucleus. In terms of biological role, transcription factor that may have a role in kidney cell differentiation. Has a critical role in the development of the urogenital tract, the eyes, and the CNS. The protein is Paired box protein Pax-2 (PAX2) of Homo sapiens (Human).